A 69-amino-acid chain; its full sequence is Peptide Hact-1 (69 aa).

An N-terminal signal peptide occupies residues 1–21 (MDRKFHLCLLLVILGTIIVQG). The propeptide occupies 22 to 57 (APLENENDADPDKPQKYRYYLKRATTEKKDNDPAKP). Cys59 and Cys68 are oxidised to a cystine.

Tentacle (ecto and/or endoderm tissue), and possibly also nematoblasts.

It is found in the secreted. The protein localises to the nematocyst. Peptide with unknown function. Has a limited effect on human peripheral blood mononuclear cells. Does not show activity against both Gram-positive and Gram-negative bacteria nor is it active on the 26 voltage-gated ion channels tested. The protein is Peptide Hact-1 of Heliofungia actiniformis (Mushroom coral).